Consider the following 516-residue polypeptide: Zinc finger protein 83 (516 aa).

Positions 1–20 are disordered; it reads MHGRKDDAQKQPVKNQLGLN. The C2H2-type 1; degenerate zinc-finger motif lies at 93 to 115; that stretch reads YKCSERGKAFHQGLHFTIHQIIH. 14 C2H2-type zinc fingers span residues 121-143, 149-171, 177-199, 205-227, 233-255, 261-283, 289-311, 317-339, 345-367, 373-395, 401-423, 429-451, 457-479, and 485-507; these read FKCD…QRIH, YKCN…RRIH, YKCN…QRIH, YKCN…RTIH, YECN…LIIH, YRCN…QRIH, YKCN…WRIH, YKCN…LIIH, YKCD…HRIH, YKCD…WRIH, YKCN…RKIH, FKCN…HAIH, and FKCN…QRFH.

Belongs to the krueppel C2H2-type zinc-finger protein family.

It localises to the nucleus. May be involved in transcriptional regulation. The sequence is that of Zinc finger protein 83 (ZNF83) from Homo sapiens (Human).